Reading from the N-terminus, the 129-residue chain is Small ribosomal subunit protein uS11 (129 aa).

This sequence belongs to the universal ribosomal protein uS11 family. In terms of assembly, part of the 30S ribosomal subunit. Interacts with proteins S7 and S18. Binds to IF-3.

Its function is as follows. Located on the platform of the 30S subunit, it bridges several disparate RNA helices of the 16S rRNA. Forms part of the Shine-Dalgarno cleft in the 70S ribosome. In Azotobacter vinelandii (strain DJ / ATCC BAA-1303), this protein is Small ribosomal subunit protein uS11.